Reading from the N-terminus, the 380-residue chain is MTYFTGFILILFAIIIKRLTPSQSKKNIVLIANAFWGILLVGYTFNEQYFVPLSATTLFFILAFLFFFSMTYILIARSGRVVFSFGTGFIESKYIYWFAGMINIISICFGIILLYNNHFSLKVMREGILDGSISGFGLGISLPLSFCCMYLARHENKKNYFYCFTLLSFLLAVLSTSKIFLILFLVYIVGINSYVSKKKLLIYGVFVFGLFALSSIILGKFSSDPEGKIISAIFDTLRVYLFSGLAAFNLYVEKNATLPENLLLYPFKEVWGTTKDIPKTDILPWINIGVWDTNVYTAFAPWYQSLGLYAAIIIGILLGFYYGIWFSFRQNLAVGFYQTFLCFPLLMLFFQEHYLLSWKMHFIYFLCAILLAMRKALEYE.

12 consecutive transmembrane segments (helical) span residues 1 to 21 (MTYFTGFILILFAIIIKRLTP), 27 to 47 (NIVLIANAFWGILLVGYTFNE), 55 to 75 (ATTLFFILAFLFFFSMTYILI), 94 to 114 (YIYWFAGMINIISICFGIILL), 132 to 152 (SISGFGLGISLPLSFCCMYLA), 169 to 189 (FLLAVLSTSKIFLILFLVYIV), 201 to 221 (LIYGVFVFGLFALSSIILGKF), 229 to 249 (IISAIFDTLRVYLFSGLAAFN), 282 to 302 (ILPWINIGVWDTNVYTAFAPW), 306 to 326 (LGLYAAIIIGILLGFYYGIWF), 332 to 352 (LAVGFYQTFLCFPLLMLFFQE), and 353 to 373 (HYLLSWKMHFIYFLCAILLAM).

Its subcellular location is the cell inner membrane. It catalyses the reaction n lipid-linked O-antigen repeat units = a lipid-linked O antigen + (n-1) polyisoprenyl diphosphate.. The protein operates within bacterial outer membrane biogenesis; LPS O-antigen biosynthesis. Its function is as follows. Polymerase involved in the biosynthesis of the lipopolysaccharide (LPS). Catalyzes the polymerization of the O-antigen repeat units on the periplasmic face of the inner membrane, leading to the formation of the lipid-linked O-antigen molecule. The polypeptide is O-antigen polymerase (Shigella dysenteriae).